The following is a 179-amino-acid chain: Large ribosomal subunit protein uL6 (179 aa).

This sequence belongs to the universal ribosomal protein uL6 family. In terms of assembly, part of the 50S ribosomal subunit.

In terms of biological role, this protein binds to the 23S rRNA, and is important in its secondary structure. It is located near the subunit interface in the base of the L7/L12 stalk, and near the tRNA binding site of the peptidyltransferase center. The chain is Large ribosomal subunit protein uL6 from Mycobacterium sp. (strain KMS).